The sequence spans 163 residues: Phosphopantetheine adenylyltransferase (163 aa).

Residue T9 coordinates substrate. ATP-binding positions include 9-10 and H17; that span reads TF. Substrate is bound by residues K41, T73, and R87. ATP is bound by residues 88–90, E98, and 123–129; these read GLR and FSFISSS.

This sequence belongs to the bacterial CoaD family. Homohexamer. It depends on Mg(2+) as a cofactor.

The protein localises to the cytoplasm. The enzyme catalyses (R)-4'-phosphopantetheine + ATP + H(+) = 3'-dephospho-CoA + diphosphate. It participates in cofactor biosynthesis; coenzyme A biosynthesis; CoA from (R)-pantothenate: step 4/5. Reversibly transfers an adenylyl group from ATP to 4'-phosphopantetheine, yielding dephospho-CoA (dPCoA) and pyrophosphate. The polypeptide is Phosphopantetheine adenylyltransferase (Desulfitobacterium hafniense (strain DSM 10664 / DCB-2)).